The following is a 69-amino-acid chain: Putative membrane protein insertion efficiency factor (69 aa).

The protein belongs to the UPF0161 family.

The protein localises to the cell membrane. Could be involved in insertion of integral membrane proteins into the membrane. The sequence is that of Putative membrane protein insertion efficiency factor from Thermomicrobium roseum (strain ATCC 27502 / DSM 5159 / P-2).